Reading from the N-terminus, the 216-residue chain is Pyridoxine/pyridoxamine 5'-phosphate oxidase (216 aa).

FMN contacts are provided by residues 63–68 (RMVLMK), 78–79 (YS), Lys-85, and Gln-107. Lys-68 provides a ligand contact to substrate. Residues Tyr-125 and Arg-129 each contribute to the substrate site. FMN is bound by residues 142–143 (QS) and Trp-187. Substrate is bound at residue 193–195 (RLH). Arg-197 contributes to the FMN binding site.

The protein belongs to the pyridoxamine 5'-phosphate oxidase family. In terms of assembly, homodimer. It depends on FMN as a cofactor.

The enzyme catalyses pyridoxamine 5'-phosphate + O2 + H2O = pyridoxal 5'-phosphate + H2O2 + NH4(+). It carries out the reaction pyridoxine 5'-phosphate + O2 = pyridoxal 5'-phosphate + H2O2. The protein operates within cofactor metabolism; pyridoxal 5'-phosphate salvage; pyridoxal 5'-phosphate from pyridoxamine 5'-phosphate: step 1/1. It participates in cofactor metabolism; pyridoxal 5'-phosphate salvage; pyridoxal 5'-phosphate from pyridoxine 5'-phosphate: step 1/1. Catalyzes the oxidation of either pyridoxine 5'-phosphate (PNP) or pyridoxamine 5'-phosphate (PMP) into pyridoxal 5'-phosphate (PLP). In Bradyrhizobium sp. (strain BTAi1 / ATCC BAA-1182), this protein is Pyridoxine/pyridoxamine 5'-phosphate oxidase.